The chain runs to 1401 residues: DNA-directed RNA polymerase subunit beta' (1401 aa).

Zn(2+) is bound by residues Cys70, Cys72, Cys85, and Cys88. Positions 460, 462, and 464 each coordinate Mg(2+). Cys808, Cys882, Cys889, and Cys892 together coordinate Zn(2+).

Belongs to the RNA polymerase beta' chain family. As to quaternary structure, the RNAP catalytic core consists of 2 alpha, 1 beta, 1 beta' and 1 omega subunit. When a sigma factor is associated with the core the holoenzyme is formed, which can initiate transcription. It depends on Mg(2+) as a cofactor. Requires Zn(2+) as cofactor.

The catalysed reaction is RNA(n) + a ribonucleoside 5'-triphosphate = RNA(n+1) + diphosphate. In terms of biological role, DNA-dependent RNA polymerase catalyzes the transcription of DNA into RNA using the four ribonucleoside triphosphates as substrates. In Legionella pneumophila subsp. pneumophila (strain Philadelphia 1 / ATCC 33152 / DSM 7513), this protein is DNA-directed RNA polymerase subunit beta'.